The chain runs to 249 residues: Triosephosphate isomerase (249 aa).

9–11 (NWK) contacts substrate. The active-site Electrophile is the histidine 94. The active-site Proton acceptor is glutamate 166. Residues glycine 172, serine 212, and 233 to 234 (GG) contribute to the substrate site.

Belongs to the triosephosphate isomerase family. As to quaternary structure, homodimer.

The protein localises to the cytoplasm. It carries out the reaction D-glyceraldehyde 3-phosphate = dihydroxyacetone phosphate. It participates in carbohydrate biosynthesis; gluconeogenesis. The protein operates within carbohydrate degradation; glycolysis; D-glyceraldehyde 3-phosphate from glycerone phosphate: step 1/1. In terms of biological role, involved in the gluconeogenesis. Catalyzes stereospecifically the conversion of dihydroxyacetone phosphate (DHAP) to D-glyceraldehyde-3-phosphate (G3P). This is Triosephosphate isomerase from Treponema pallidum (strain Nichols).